Consider the following 466-residue polypeptide: MLPRHSDPIVAIATAPGRGAVGIVRVSGKQIGALVQALCGRALKPREATYLPFRDAAGQAIDQGLALYFPAPHSYTGEDVLELQAHGGPVVLQLLLARCLEAAQGLLPRLRLAEPGEFTERAFLNDKIDLAQAEAIADLIDASTEAAARGASRSLSGDFSREIHTLRDALVHLRMLVEATLDFPEEEIDFLRKADASGQLSNLKRSLARVMQRASQGALLREGIKVVIAGQPNAGKSSLLNALAGAELAIVTPIAGTTRDKVQQTIQIEGVPLHVIDTAGLRESDDEVERIGIARAWDEIAGADAVLFLHDLTRWGSAQYQDDDAAIAHTLSNRLPAGVPVVDVWNKADAAPQAAAPAREGESQAVLLSARTGQGLDTLRRQLLQIAGWQSAAEGVYIARARHIEALRAVDAHLMEAAAQLESDGPALDLLAEELRLAQNALNTITGEFTSDDLLGVIFSSFCIGK.

Positions 25, 82, and 127 each coordinate (6S)-5-formyl-5,6,7,8-tetrahydrofolate. Residues 223 to 388 (GIKVVIAGQP…LRRQLLQIAG (166 aa)) form the TrmE-type G domain. Residue Asn-233 participates in K(+) binding. Residues 233 to 238 (NAGKSS), 252 to 258 (TPIAGTT), 277 to 280 (DTAG), 346 to 349 (NKAD), and 369 to 371 (SAR) each bind GTP. Ser-237 contacts Mg(2+). The K(+) site is built by Thr-252, Ile-254, and Thr-257. Thr-258 contributes to the Mg(2+) binding site. Lys-466 provides a ligand contact to (6S)-5-formyl-5,6,7,8-tetrahydrofolate.

This sequence belongs to the TRAFAC class TrmE-Era-EngA-EngB-Septin-like GTPase superfamily. TrmE GTPase family. In terms of assembly, homodimer. Heterotetramer of two MnmE and two MnmG subunits. K(+) serves as cofactor.

The protein resides in the cytoplasm. In terms of biological role, exhibits a very high intrinsic GTPase hydrolysis rate. Involved in the addition of a carboxymethylaminomethyl (cmnm) group at the wobble position (U34) of certain tRNAs, forming tRNA-cmnm(5)s(2)U34. In Acidovorax sp. (strain JS42), this protein is tRNA modification GTPase MnmE.